The primary structure comprises 203 residues: NAD(P)H dehydrogenase (quinone) (203 aa).

One can recognise a Flavodoxin-like domain in the interval 3 to 194 (VLIVYYSMYG…AGARFQGRYV (192 aa)). FMN-binding positions include 9 to 14 (SMYGHI) and 82 to 84 (TRF). Tyr11 serves as a coordination point for NAD(+). Position 102 (Trp102) interacts with substrate. FMN contacts are provided by residues 117 to 123 (SSATQHG) and His138.

It belongs to the WrbA family. FMN serves as cofactor.

The catalysed reaction is a quinone + NADH + H(+) = a quinol + NAD(+). It carries out the reaction a quinone + NADPH + H(+) = a quinol + NADP(+). This is NAD(P)H dehydrogenase (quinone) from Geobacter sulfurreducens (strain ATCC 51573 / DSM 12127 / PCA).